The sequence spans 508 residues: Pancreatic alpha-amylase (508 aa).

The N-terminal stretch at 1-15 (MKFVLLLSLIGFCWA) is a signal peptide. Residue Q16 is modified to Pyrrolidone carboxylic acid. 3 disulfides stabilise this stretch: C43–C101, C85–C130, and C156–C172. 3 residues coordinate Ca(2+): N115, R170, and D179. R207 contacts chloride. D209 (nucleophile) is an active-site residue. H213 contacts Ca(2+). Catalysis depends on E245, which acts as the Proton donor. Positions 310 and 349 each coordinate chloride. Intrachain disulfides connect C390–C396 and C462–C474.

The protein belongs to the glycosyl hydrolase 13 family. In terms of assembly, monomer. Ca(2+) is required as a cofactor. It depends on chloride as a cofactor.

The protein resides in the secreted. It localises to the extracellular space. It carries out the reaction Endohydrolysis of (1-&gt;4)-alpha-D-glucosidic linkages in polysaccharides containing three or more (1-&gt;4)-alpha-linked D-glucose units.. In Rattus norvegicus (Rat), this protein is Pancreatic alpha-amylase (Amy2).